A 217-amino-acid chain; its full sequence is Probable transaldolase (217 aa).

The active-site Schiff-base intermediate with substrate is the lysine 85.

Belongs to the transaldolase family. Type 3B subfamily.

Its subcellular location is the cytoplasm. The enzyme catalyses D-sedoheptulose 7-phosphate + D-glyceraldehyde 3-phosphate = D-erythrose 4-phosphate + beta-D-fructose 6-phosphate. It participates in carbohydrate degradation; pentose phosphate pathway; D-glyceraldehyde 3-phosphate and beta-D-fructose 6-phosphate from D-ribose 5-phosphate and D-xylulose 5-phosphate (non-oxidative stage): step 2/3. Its function is as follows. Transaldolase is important for the balance of metabolites in the pentose-phosphate pathway. This chain is Probable transaldolase, found in Brachyspira hyodysenteriae (strain ATCC 49526 / WA1).